Here is a 76-residue protein sequence, read N- to C-terminus: MAERPLDVIHKSLDKDVLVILKKGFEFRGKLIGYDIHLNVVLANAELLQDGEVVKKYGKIVIRGDNVLAISPTEEG.

Residues 4-76 form the Sm domain; that stretch reads RPLDVIHKSL…VLAISPTEEG (73 aa).

It belongs to the snRNP Sm proteins family.

The chain is Putative snRNP Sm-like protein from Pyrococcus furiosus (strain ATCC 43587 / DSM 3638 / JCM 8422 / Vc1).